The sequence spans 154 residues: UPF0225 protein Spro_2712 (154 aa).

This sequence belongs to the UPF0225 family.

The polypeptide is UPF0225 protein Spro_2712 (Serratia proteamaculans (strain 568)).